The sequence spans 221 residues: tRNA (guanine-N(7)-)-methyltransferase (221 aa).

S-adenosyl-L-methionine-binding residues include Glu51, Glu76, Asp103, and Asp125. Residue Asp125 is part of the active site. Lys129 and Asp161 together coordinate substrate.

This sequence belongs to the class I-like SAM-binding methyltransferase superfamily. TrmB family.

The enzyme catalyses guanosine(46) in tRNA + S-adenosyl-L-methionine = N(7)-methylguanosine(46) in tRNA + S-adenosyl-L-homocysteine. It participates in tRNA modification; N(7)-methylguanine-tRNA biosynthesis. Functionally, catalyzes the formation of N(7)-methylguanine at position 46 (m7G46) in tRNA. This is tRNA (guanine-N(7)-)-methyltransferase from Wolbachia pipientis wMel.